We begin with the raw amino-acid sequence, 1115 residues long: G-protein coupled receptor GRL101 (1115 aa).

An N-terminal signal peptide occupies residues 1–24; it reads MATMSGTTIVCLIYLTTMLGNSQG. Over 25–767 the chain is Extracellular; the sequence is VNLKIESPSP…SCEDLMSNHV (743 aa). LDL-receptor class A domains lie at 36–79, 77–115, 116–155, 156–196, 195–232, 231–269, 272–318, 320–363, 365–403, 404–442, 444–485, and 486–525; these read TLCS…TCGC, CGCL…ECDI, YICP…ICER, RECV…ACDS, DSDK…NCKL, KLCD…VCAN, YGCP…YCSN, SECK…SCLA, PKCS…NCEN, HQCA…DCDP, PVCE…NCSQ, and HICL…NCRY. Cystine bridges form between C38/C53, C46/C66, C60/C77, C79/C91, C86/C104, C98/C113, C118/C131, C138/C153, C158/C170, C165/C183, C177/C194, C202/C220, C214/C230, C233/C245, C240/C258, and C252/C267. A glycan (N-linked (GlcNAc...) asparagine) is linked at N87. Residue N166 is glycosylated (N-linked (GlcNAc...) asparagine). N269 is a glycosylation site (N-linked (GlcNAc...) asparagine). 3 disulfides stabilise this stretch: C274-C291, C282-C304, and C298-C316. The N-linked (GlcNAc...) asparagine glycan is linked to N318. 15 disulfides stabilise this stretch: C322/C339, C334/C352, C346/C361, C367/C379, C374/C392, C386/C401, C406/C418, C413/C431, C425/C440, C446/C458, C453/C474, C465/C483, C488/C500, C495/C513, and C507/C523. The N-linked (GlcNAc...) asparagine glycan is linked to N482. N502 carries an N-linked (GlcNAc...) asparagine glycan. Residues 518-562 form the LRRNT domain; sequence WDENNCRYWCPHGQAICQCEGVTMDCTGQKLKEMPVQQMEEDLSK. N571 carries an N-linked (GlcNAc...) asparagine glycan. 6 LRR repeats span residues 584-605, 608-629, 632-653, 656-677, 680-701, and 704-725; these read KVTY…SFQN, KLTH…SLLG, NLKQ…TFSS, HLTV…MFKG, QITV…AFNN, and NVRL…VFMG. N-linked (GlcNAc...) asparagine glycans are attached at residues N618 and N624. N685 carries N-linked (GlcNAc...) asparagine glycosylation. A helical membrane pass occupies residues 768–788; it reads LRVSIWVLGVIALVGNFVVIF. Residues 789–801 lie on the Cytoplasmic side of the membrane; sequence WRVRDFRGGKVHS. The chain crosses the membrane as a helical span at residues 802-822; it reads FLITNLAIGDFLMGVYLLIIA. The Extracellular portion of the chain corresponds to 823-857; it reads TADTYYRGVYISHDENWKQSGLCQFAGFVSTFSSE. Residues 858–878 traverse the membrane as a helical segment; the sequence is LSVLTLSTITLDRLICILFPL. Over 879–887 the chain is Cytoplasmic; the sequence is RRTRLGLRQ. A helical membrane pass occupies residues 888–908; sequence AIIVMSCIWVLVFLLAVLPLL. At 909–941 the chain is on the extracellular side; that stretch reads GFSYFENFYGRSGVCLALHVTPDRRPGWEYSVG. A helical transmembrane segment spans residues 942-962; the sequence is VFILLNLLSFVLIASSYLWMF. The Cytoplasmic segment spans residues 963-988; the sequence is SVAKKTRSAVRTAESKNDNAMARRMT. Residues 989–1009 traverse the membrane as a helical segment; the sequence is LIVMTDFCCWVPIIVLGFVSL. The Extracellular segment spans residues 1010-1017; it reads AGARADDQ. A helical transmembrane segment spans residues 1018-1038; that stretch reads VYAWIAVFVLPLNSATNPVIY. The Cytoplasmic portion of the chain corresponds to 1039-1115; it reads TLSTAPFLGN…YYNTELHSDS (77 aa).

Belongs to the G-protein coupled receptor 1 family. Predominantly expressed in a small number of neurons within the central nervous system and to a lesser extent in the heart.

The protein resides in the cell membrane. Functionally, might directly transduce signals carried by large extracellular lipoprotein complexes into neuronal events. The chain is G-protein coupled receptor GRL101 from Lymnaea stagnalis (Great pond snail).